The following is a 415-amino-acid chain: L-threonine dehydratase biosynthetic IlvA (415 aa).

An N6-(pyridoxal phosphate)lysine modification is found at Lys-53. Residues Asn-80, 183–187 (GGGGL), and Ser-308 each bind pyridoxal 5'-phosphate. The region spanning 332–406 (HYFIIQFPQR…KGFEYREINK (75 aa)) is the ACT-like domain.

This sequence belongs to the serine/threonine dehydratase family. Homotetramer. Requires pyridoxal 5'-phosphate as cofactor.

It carries out the reaction L-threonine = 2-oxobutanoate + NH4(+). The protein operates within amino-acid biosynthesis; L-isoleucine biosynthesis; 2-oxobutanoate from L-threonine: step 1/1. Functionally, catalyzes the anaerobic formation of alpha-ketobutyrate and ammonia from threonine in a two-step reaction. The first step involved a dehydration of threonine and a production of enamine intermediates (aminocrotonate), which tautomerizes to its imine form (iminobutyrate). Both intermediates are unstable and short-lived. The second step is the nonenzymatic hydrolysis of the enamine/imine intermediates to form 2-ketobutyrate and free ammonia. In the low water environment of the cell, the second step is accelerated by RidA. This chain is L-threonine dehydratase biosynthetic IlvA (ilvA), found in Halalkalibacterium halodurans (strain ATCC BAA-125 / DSM 18197 / FERM 7344 / JCM 9153 / C-125) (Bacillus halodurans).